Consider the following 299-residue polypeptide: ATP phosphoribosyltransferase (299 aa).

The protein belongs to the ATP phosphoribosyltransferase family. Long subfamily. Equilibrium between an active dimeric form, an inactive hexameric form and higher aggregates. Interconversion between the various forms is largely reversible and is influenced by the natural substrates and inhibitors of the enzyme. Requires Mg(2+) as cofactor.

It is found in the cytoplasm. It catalyses the reaction 1-(5-phospho-beta-D-ribosyl)-ATP + diphosphate = 5-phospho-alpha-D-ribose 1-diphosphate + ATP. It participates in amino-acid biosynthesis; L-histidine biosynthesis; L-histidine from 5-phospho-alpha-D-ribose 1-diphosphate: step 1/9. Feedback inhibited by histidine. Catalyzes the condensation of ATP and 5-phosphoribose 1-diphosphate to form N'-(5'-phosphoribosyl)-ATP (PR-ATP). Has a crucial role in the pathway because the rate of histidine biosynthesis seems to be controlled primarily by regulation of HisG enzymatic activity. The chain is ATP phosphoribosyltransferase from Buchnera aphidicola subsp. Baizongia pistaciae (strain Bp).